The following is a 2812-amino-acid chain: MAARAQNNGEMDTRIAVIGMSAILPCGTTVRESWETIRAGIDCLSDLPEDRVDVTAYFDPVKTTKDKIYCKRGGFIPEYDFDAREFGLNMFQMEDSDANQTISLLKVKEALQDAGIDALSKEKKNIGCVLGIGGGQKSSHEFYSRLNYVVVDKVLRKMGMPEEDIKVAVEKYKANFPEWRLDSFPGFLGNVTAGRCTNTFNLDGMNCVVDAACASSLIAVKVAIDELLHGDCDMMVTGATCTDNSIGMYMAFSKTPVFSTDPSVRAYDEKTKGMLIGEGSAMLVLKRYADAVRDGDDIHAVIRGCASSSDGKAAGIYTPTISGQEEALRRAYNRACVDPATVTLVEGHGTGTPVGDRIELTALRNLFDKAYGEGNHEKVAVGSIKSTIGHLKAVAGLAGMIKVIMALKHKTLPGTINVDNPPALYDGTPINESSLYINTMNRPWFPPPGVPRRAGISSFGFGGANYHAVLEEAEPEHASAYRLNKRPQPVLMLANSAQELASLCRAQLAAFEAALEEDKAVKNVAYIKCVEFCEEFKFPGSVPAGSARLGFLVKDAEDATATLRAICAQFAKDVAKEAWRLPREGVSFRAKGIATEGAVAALFSGQGAQYTHMFSEVAMNWPQFRQSISAMDAAQCKVAGEDKDFERVSQVLYPRKPYEREQEQDHKKISLTAYSQPSTLACALGAFEIFKDSGFTPDFAAGHSLGEFAALYAAGCVDRDELYELVCRRARIMGGKDAPATPKGCMAAVIGPDAEKIQIRSPNVWLGNSNSPSQTVITGSVEGIQAETAILQKEGFRVVPLACESAFHSPQMENASAAFKDVISKTSFRAPKAETKLFSNVSGETYPRDARDMLTQHMTSSVKFLTQVRNMHQAGARIFVEFGPKQVLSKLVSETLKDDPSIVTVSVNPASGKDSDIQLRDAAVQLVVAGVNLQGFDKWDAPDATRMKAIKKKRTTLRLSAATYVSDKTKKVREAAMNDGRCISYIKNGAAAPAPAPVVDEEAKREAARLQKQLEDAQRQLDEAKRAADEANQKLAAAKEEAKSAAASSKTSAVDTAVVEKHRAILKSMLAELDGYGSVDASALQQQPAAAAPAPAAAAPAPAAPAPAAAVDSALLARAESVVMEVLATKTGYETDMIEADMELETELGIDSIKRVEILSEVQAQLNVEAKDVDALSRTRTVGEVVDAMKAEIAGSAAPAPAAAAPAAAAPAPAAAAAPAAPAAGVDSALLERAETVVMEVLAAKTGYETDMIEADMELETELGIDSIKRVEILSEVQAQLNVEAKDVDALSRTRTVGEVVNAMKAEISGGSAPAPAAAAPAAAAPAPAAAPAAGVDSALLAKAETVVMEVLAAKTGYETDMIEADMELETELGIDSIKRVEILSEVQAQLNVEAKDVDALSRTRTVGEVVNAMKAEISGGSAPAPAAAAPAPAAPAPAAAAPAPAAGVDSALLAKAETVVMEVLAAKTGYETDMIEADMELETELGIDSIKRVEILSEVQAQLNVEAKDVDALSRTRTVGEVVDAMKAEISGGSAPAPAAAAPAPAAPAPAAAAPAPAAGVDSALLAKAETVVMEVLAAKTGYETDMIEADMELETELGIDSIKRVEILSEVQAQLNVEAKDVDALSRTRTVGEVVDAMKAEISGGSAPAPAAAAPAPAAAAPAPAAAAPAAGVDSALLAKAETVVMEVLAAKTGYETDMIESDMELETELGIDSIKRVEILSEVQAQLNVEAKDVDALSRTRTVGEVVDAMKAEISGGSAPAAAAPAPAAAAPAPAAAAPAAGVDSALLAKAETVVMEVLAAKTGYETDMIESDMELETELGIDSIKRVEILSEVQAQLNVEAKDVDALSRTRTVGEVVDAMKAEISGGSAPAAAAPAPAAAAPAPAAAAPAAGVDSALLAKAETVVMEVLAAKTGYETDMIEADMELETELGIDSIKRVEILSEVQAQLNVEAKDVDALSRTRTVGEVVDAMKAEISGGSASASAPAPAATAAAVKIDSVHGADCDDLSLMHAKVVDIRRPDELLLERPENRPVLVVDDGSELTLALVRVLGACAVVLTFDGLQLAQRAGAAAIRHVLAKDLSAESAEKAVQEAEQRFGKLGGLISQQADRFEPASILGFTLMLAKFAKASLCTSVPGGRPAFIGVARLDGRLGFTSQDGADALTRAQRGAIFGLCKTIGLEWSDSDVFSRGVDVAQNMHPEDAAVAIVREMACADIRVREVGIGANQQRCTIRAVKLEPGAPQRQISKDDVLVVSGGARGITPLCIREITRQISGGKYILLGRSKVSSSEPTWCAGISDDKAVQKAATQELKRAFAAGEGPKPTPRAITKLVGSVLGAREVRSSVAAIEALGGKAIYSSCDVNSAADVAKAVREAEAQLGGRVSGIVHASGVLRDRLIEKKLPDEFDAVYGTKVAGLENLLNTVDRANLKHMVLFSSLAGFHGNVGQSDYAMANEALNKIGLELSNSGVSVKSICFGPWDGGMVTPQLKKQFQEMGVQIIPREGGADTVARIVLGSSPAEILVGNWRTPTKKIGTETITLHRKISAKSNAFLDDHVIQGRRVLPMTLAIGSLAETCLGLFPGYSLWAIDDAQLFKGVTVDGDVNCEIALTPSEGQAGRVNVQATLKTFSSGKLVPAYRAVVVLSSQGAPPANATMQPPSLSADPAAQSAVYDGKTLFHGPAFRGIDEVLSCSKSQLVAKCRAVPGSDAARAEFATDTDAHDPFVNDLAFQAMLVWVRRTLGQAALPNSIQRIVQHRPVPQDKPFYITLRSNQAGGHSQHKHALQFHNEQGDLFIDVQASVIATDSLAF.

A Ketosynthase family 3 (KS3) domain is found at 12–472 (DTRIAVIGMS…GANYHAVLEE (461 aa)). Residues Cys-213, His-348, and His-390 each act as for beta-ketoacyl synthase activity in the active site. One can recognise a Malonyl-CoA:ACP transacylase (MAT) domain in the interval 602-913 (LFSGQGAQYT…TVSVNPASGK (312 aa)). Residues 1000 to 1048 (DEEAKREAARLQKQLEDAQRQLDEAKRAADEANQKLAAAKEEAKSAAAS) are a coiled coil. Carrier domains lie at 1114 to 1193 (ALLA…KAEI), 1232 to 1308 (ERAE…KAEI), and 1342 to 1418 (AKAE…KAEI). O-(pantetheine 4'-phosphoryl)serine occurs at positions 1152, 1267, and 1377. Positions 1422–1442 (SAPAPAAAAPAPAAPAPAAAA) are disordered. Over residues 1423-1442 (APAPAAAAPAPAAPAPAAAA) the composition is skewed to low complexity. The region spanning 1455 to 1531 (AKAETVVMEV…EVVDAMKAEI (77 aa)) is the Carrier 4 domain. Ser-1490 is subject to O-(pantetheine 4'-phosphoryl)serine. The segment at 1535 to 1555 (SAPAPAAAAPAPAAPAPAAAA) is disordered. Low complexity predominate over residues 1536-1555 (APAPAAAAPAPAAPAPAAAA). Carrier domains lie at 1568–1644 (AKAE…KAEI), 1681–1757 (AKAE…KAEI), 1792–1868 (AKAE…KAEI), and 1903–1979 (AKAE…KAEI). Ser-1603, Ser-1716, Ser-1827, and Ser-1938 each carry O-(pantetheine 4'-phosphoryl)serine. The region spanning 2257 to 2484 (VVSGGARGIT…VKSICFGPWD (228 aa)) is the Ketoreductase (KR) domain. The tract at residues 2524–2651 (EILVGNWRTP…RAVVVLSSQG (128 aa)) is N-terminal hotdog fold. Residues 2524–2812 (EILVGNWRTP…SVIATDSLAF (289 aa)) enclose the PKS/mFAS DH domain. Residues 2540 to 2800 (ETITLHRKIS…NEQGDLFIDV (261 aa)) are dehydratase (DH) domain. His-2559 (proton acceptor; for dehydratase activity) is an active-site residue. The C-terminal hotdog fold stretch occupies residues 2666-2812 (ADPAAQSAVY…SVIATDSLAF (147 aa)). Asp-2730 functions as the Proton donor; for dehydratase activity in the catalytic mechanism.

Component of the polyunsaturated fatty acid synthase complex composed of at least ORF-A, ORF-B and ORF-C. It depends on pantetheine 4'-phosphate as a cofactor.

It participates in lipid metabolism; fatty acid biosynthesis. Its function is as follows. Poliketide synthase-like protein; part of the polyunsaturated fatty acid synthase composed of the 3 PKS-like subunits A, B and C. While the saturated fatty acids (SFAs) in Thraustochytrium are produced by the conventional fatty acid synthase (FAS) pathway, polyunsaturated fatty acids (PUFAs) including docosahexeanoic acid (DHA) and docosapentaenoic acid (DPA) are synthesized via an anaerobical PKS pathway. PUFA synthase assimilates fatty acyl-CoA, the product of FAS, as the starter unit to synthesize DPA, and this starter unit may be butyryl-CoA, hexanoyl-CoA, or octanoyl-CoA. DPA and DHA biosynthesis seem to differ by the reduction at the N-3 position by PUFA synthase, not the extension of carbon chain. In DHA biosynthesis, PUFA synthase extends the fatty acyl chain from the methyl toward the carboxyl end, and the double bond is formed when the carbon chain is growing, instead of afterward. Therefore, PUFA synthase is unable to transform DPA to DHA, suggesting that DPA is not the precursor of DHA. Moreover, DPA molecule is partly extended by FAS KS domain, so DPA biosynthesis is less dependent on PUFA synthase KS domain than DHA. This Thraustochytrium sp. (strain ATCC 26185 / S-3) protein is Polyunsaturated fatty acid synthase subunit A.